The sequence spans 269 residues: Tryptophan synthase alpha chain (269 aa).

Catalysis depends on proton acceptor residues Glu54 and Asp65.

Belongs to the TrpA family. Tetramer of two alpha and two beta chains.

It catalyses the reaction (1S,2R)-1-C-(indol-3-yl)glycerol 3-phosphate + L-serine = D-glyceraldehyde 3-phosphate + L-tryptophan + H2O. Its pathway is amino-acid biosynthesis; L-tryptophan biosynthesis; L-tryptophan from chorismate: step 5/5. Its function is as follows. The alpha subunit is responsible for the aldol cleavage of indoleglycerol phosphate to indole and glyceraldehyde 3-phosphate. In Synechococcus sp. (strain CC9902), this protein is Tryptophan synthase alpha chain.